Consider the following 408-residue polypeptide: MVQVNGNYLKLKAGYLFPEIGRRVKAFSAANPDAALIRLGIGDVTEPLPQACRDAMKTAIDAMGTAEGFHGYGPEQGYGWLREAIATHDFKARGCDISAEEIFVSDGSKCDSSNILDILGEGNRVAVTDPVYPVYVDSNVMAGRTGDAGDEGRYAGLTYLPISADNGFAAQIPSDPVDLIYLCFPNNPTGAVATKEQLKAWVDYARANDALILFDAAYEAFIQDPSLPHSIFEIEGARDCAIEFRSFSKNAGFTGTRCAFTVVPKGLKGKAANGEAVELWSLWNRRQSTKFNGVSYIIQRGAEAVYSEAGQAEVKGLVSFYMENAAIIRRELSAAGLTIYGGEHAPYVWIKTPDGMDSWGFFDHLLNKANVVGTPGSGFGAAGEGYFRLSAFNSRANVDEAMARIKAL.

Residues tyrosine 15 and glycine 42 each contribute to the substrate site. Residues tyrosine 72, 108–109, tyrosine 132, asparagine 187, tyrosine 218, and 246–248 contribute to the pyridoxal 5'-phosphate site; these read SK and SFS. Residues lysine 109, tyrosine 132, and asparagine 187 each contribute to the substrate site. Residue lysine 249 is modified to N6-(pyridoxal phosphate)lysine. Pyridoxal 5'-phosphate contacts are provided by arginine 257 and asparagine 292. Asparagine 292 and arginine 388 together coordinate substrate.

The protein belongs to the class-I pyridoxal-phosphate-dependent aminotransferase family. LL-diaminopimelate aminotransferase subfamily. In terms of assembly, homodimer. Pyridoxal 5'-phosphate is required as a cofactor.

The catalysed reaction is (2S,6S)-2,6-diaminopimelate + 2-oxoglutarate = (S)-2,3,4,5-tetrahydrodipicolinate + L-glutamate + H2O + H(+). The protein operates within amino-acid biosynthesis; L-lysine biosynthesis via DAP pathway; LL-2,6-diaminopimelate from (S)-tetrahydrodipicolinate (aminotransferase route): step 1/1. Functionally, involved in the synthesis of meso-diaminopimelate (m-DAP or DL-DAP), required for both lysine and peptidoglycan biosynthesis. Catalyzes the direct conversion of tetrahydrodipicolinate to LL-diaminopimelate. The polypeptide is LL-diaminopimelate aminotransferase (Synechococcus sp. (strain WH7803)).